The following is a 767-amino-acid chain: Two-component response regulator-like PRR73 (767 aa).

The interval 1 to 64 is disordered; the sequence is MGSACEAGTD…EPQQTDEQKE (64 aa). Residues 82–200 enclose the Response regulatory domain; sequence RVLLVENDDS…ELKNLWQHVW (119 aa). A compositionally biased stretch (low complexity) spans 205–214; that stretch reads SSSGSGSESG. 5 disordered regions span residues 205–272, 312–388, 476–546, 646–701, and 727–767; these read SSSG…QSSW, RWLP…NEPT, ASNQ…RGKV, ANYS…SGSG, and NFGK…DEDR. Residues 238 to 252 show a composition bias toward acidic residues; that stretch reads DNEDDDDNDEDDDDL. Composition is skewed to polar residues over residues 263–272, 343–361, and 488–497; these read DNGSGTQSSW, RNSS…VNPT, and CSPQDNSSEA. Over residues 518–531 the composition is skewed to low complexity; that stretch reads GSNGSSNNNDMGSS. Positions 532–543 are enriched in polar residues; sequence TKNAITKPSSNR. Over residues 689–700 the composition is skewed to gly residues; that stretch reads GAGGGNGSGSGS. In terms of domain architecture, CCT spans 712–754; that stretch reads REAALNKFRQKRKVRNFGKKVRYQSRKRLAEQRPRIRGQFVRQ. Residues 727 to 738 are compositionally biased toward basic residues; that stretch reads NFGKKVRYQSRK.

Belongs to the ARR-like family.

Its subcellular location is the nucleus. In terms of biological role, controls photoperiodic flowering response. Seems to be one of the component of the circadian clock. Expression of several members of the ARR-like family is controlled by circadian rhythm. The particular coordinated sequential expression of PRR73, PRR37, PRR95, PRR59 and PPR1 result to circadian waves that may be at the basis of the endogenous circadian clock. The polypeptide is Two-component response regulator-like PRR73 (PRR73) (Oryza sativa subsp. japonica (Rice)).